We begin with the raw amino-acid sequence, 355 residues long: Magnesium-chelatase subunit ChlI (355 aa).

46 to 53 (GDRGTGKS) contributes to the ATP binding site. C281 and C323 are joined by a disulfide.

Belongs to the Mg-chelatase subunits D/I family. As to quaternary structure, the magnesium chelatase complex is a heterotrimer consisting of subunits CHLI, CHLD and CHLH.

It is found in the plastid. Its subcellular location is the chloroplast. It catalyses the reaction protoporphyrin IX + Mg(2+) + ATP + H2O = Mg-protoporphyrin IX + ADP + phosphate + 3 H(+). The protein operates within porphyrin-containing compound metabolism; chlorophyll biosynthesis. Its activity is regulated as follows. Redox regulation; active in reducing conditions, inactive in oxidizing conditions. Thioredoxins f and m mediate the reversible reductive activation of oxidized CHLI. Involved in chlorophyll biosynthesis. Catalyzes the insertion of magnesium ion into protoporphyrin IX to yield Mg-protoporphyrin IX. The magnesium-chelatase is a complex of three subunits, CHLI, CHLD and CHLH. The reaction takes place in two steps, with an ATP-dependent activation followed by an ATP-dependent chelation step. This Nephroselmis olivacea (Green alga) protein is Magnesium-chelatase subunit ChlI (chlI).